The following is a 502-amino-acid chain: 4,4'-diaponeurosporene oxygenase (502 aa).

8–20 contacts FAD; it reads IIGGGLGGISAAI.

It belongs to the carotenoid/retinoid oxidoreductase family. CrtP subfamily. Requires FAD as cofactor.

The enzyme catalyses all-trans-4,4'-diaponeurosporene + 2 AH2 + 2 O2 = 4,4'-diaponeurosporenal + 2 A + 3 H2O. It participates in carotenoid biosynthesis; staphyloxanthin biosynthesis; staphyloxanthin from farnesyl diphosphate: step 3/5. Functionally, involved in the biosynthesis of the yellow-orange carotenoid staphyloxanthin, which plays a role in the virulence via its protective function against oxidative stress. Catalyzes the oxidation of the terminal methyl side group of 4,4'-diaponeurosporene to form 4,4'-diaponeurosporen-4-al. The chain is 4,4'-diaponeurosporene oxygenase from Staphylococcus haemolyticus (strain JCSC1435).